Here is a 375-residue protein sequence, read N- to C-terminus: MFNIIKNDKNSNARLGILELPHGNVATPCFMPVGTLGVMKALKHDVLEKLGCDLMLANTYHLYLRPGIDVIKKYGNLHNFTTWNKNFLTDSGGFQVFSLSNFRKIEDEGVDFKSHIDGSRHYFTPESVFSMQETFESDIIMALDICSPYGIDYDEASLYTNITTSWARRTLCAYKNRKEGYEGLLFLITQGNFFKDLRKRSTESILELNSPGIAIGGISVGEPRDRYLEILEYNSSLIPKDKPKYVMGIGTPHYILDAIYNGIDIFDCVNPTRIARHGSLLTDNGILRINRAEFRFDTCSVERECSCTLCTRYSRGYLRHLFKSEEALGVMLASEHNIHYMFRLINKAKNAIMNDNFVKFRKLYLDKYDEGNLNE.

D90 acts as the Proton acceptor in catalysis. Substrate contacts are provided by residues 90 to 94 (DSGGF), D144, Q190, and G217. Residues 248–254 (GIGTPHY) are RNA binding. The active-site Nucleophile is D267. Residues 272–276 (TRIAR) are RNA binding; important for wobble base 34 recognition. Zn(2+) is bound by residues C305, C307, C310, and H336.

Belongs to the queuine tRNA-ribosyltransferase family. Homodimer. Within each dimer, one monomer is responsible for RNA recognition and catalysis, while the other monomer binds to the replacement base PreQ1. Zn(2+) is required as a cofactor.

The enzyme catalyses 7-aminomethyl-7-carbaguanine + guanosine(34) in tRNA = 7-aminomethyl-7-carbaguanosine(34) in tRNA + guanine. The protein operates within tRNA modification; tRNA-queuosine biosynthesis. Catalyzes the base-exchange of a guanine (G) residue with the queuine precursor 7-aminomethyl-7-deazaguanine (PreQ1) at position 34 (anticodon wobble position) in tRNAs with GU(N) anticodons (tRNA-Asp, -Asn, -His and -Tyr). Catalysis occurs through a double-displacement mechanism. The nucleophile active site attacks the C1' of nucleotide 34 to detach the guanine base from the RNA, forming a covalent enzyme-RNA intermediate. The proton acceptor active site deprotonates the incoming PreQ1, allowing a nucleophilic attack on the C1' of the ribose to form the product. After dissociation, two additional enzymatic reactions on the tRNA convert PreQ1 to queuine (Q), resulting in the hypermodified nucleoside queuosine (7-(((4,5-cis-dihydroxy-2-cyclopenten-1-yl)amino)methyl)-7-deazaguanosine). The polypeptide is Queuine tRNA-ribosyltransferase (Borrelia duttonii (strain Ly)).